The sequence spans 816 residues: Phosphatidylinositol 4-kinase beta (816 aa).

3 disordered regions span residues 1–29, 99–121, and 250–318; these read MGDMVVEPATLKPTSEPTPSPSGNNGGSL, EEEDEMEPGVVSGTAKGTRRRRQ, and RKRE…SFSS. At G2 the chain carries N-acetylglycine. The interval 2–68 is interaction with ACBD3; the sequence is GDMVVEPATL…VKLLHGGVAI (67 aa). The span at 10 to 29 shows a compositional bias: low complexity; sequence TLKPTSEPTPSPSGNNGGSL. A PIK helical domain is found at 61–242; that stretch reads LLHGGVAISS…GTKLRKLILS (182 aa). At S258 the chain carries Phosphoserine. Residue T263 is modified to Phosphothreonine. Phosphoserine occurs at positions 266, 275, 277, 284, and 294. 2 stretches are compositionally biased toward polar residues: residues 278–297 and 306–318; these read DATASISLSSNLKRTASNPK and SSSTESIDNSFSS. The residue at position 428 (S428) is a Phosphoserine. Position 438 is a phosphothreonine (T438). At S511 the chain carries Phosphoserine. 2 positions are modified to phosphothreonine: T517 and T519. The region spanning 535 to 801 is the PI3K/PI4K catalytic domain; the sequence is EPWQEKVRRI…MVDGSMRSIT (267 aa). The G-loop stretch occupies residues 541 to 547; that stretch reads VRRIREG. Positions 668 to 676 are catalytic loop; sequence QVKDRHNGN. Positions 687–711 are activation loop; that stretch reads HIDFGFILSSSPRNLGFETSAFKLT.

The protein belongs to the PI3/PI4-kinase family. Type III PI4K subfamily. Interacts with ARF1 and ARF3 in the Golgi complex, but not with ARF4, ARF5 or ARF6. Interacts with NCS1/FREQ in a calcium-independent manner. Interacts with CALN1/CABP8 and CALN2/CABP7; in a calcium-dependent manner; this interaction competes with NCS1/FREQ binding. Interacts with ACBD3. Interacts with ARMH3, YWHAB, YWHAE, YWHAG, YWHAH, YWHAQ, YWHAZ and SFN. Interacts with GGA2 (via VHS domain); the interaction is important for PI4KB location at the Golgi apparatus membrane. Interacts with ATG9A. Mg(2+) serves as cofactor. Mn(2+) is required as a cofactor. As to expression, strongly expressed in brain, kidney, lung, small intestine, uterus and adrenal gland. Weaker expression in liver, heart, skeletal muscle, thymus and testis. Not detected in spleen.

It is found in the golgi apparatus. Its subcellular location is the endomembrane system. The protein resides in the mitochondrion outer membrane. It localises to the rough endoplasmic reticulum membrane. The protein localises to the golgi apparatus membrane. It catalyses the reaction a 1,2-diacyl-sn-glycero-3-phospho-(1D-myo-inositol) + ATP = a 1,2-diacyl-sn-glycero-3-phospho-(1D-myo-inositol 4-phosphate) + ADP + H(+). Inhibited by wortmannin. Increased kinase activity upon interaction with NCS1/FREQ. Functionally, phosphorylates phosphatidylinositol (PI) in the first committed step in the production of the second messenger inositol-1,4,5,-trisphosphate (PIP). May regulate Golgi disintegration/reorganization during mitosis, possibly via its phosphorylation. Involved in Golgi-to-plasma membrane trafficking. May play an important role in the inner ear development. The sequence is that of Phosphatidylinositol 4-kinase beta (Pi4kb) from Rattus norvegicus (Rat).